The primary structure comprises 349 residues: Ferredoxin--NADP reductase 1 (349 aa).

FAD-binding residues include E36, K44, Y48, I88, L123, D290, and S331.

Belongs to the ferredoxin--NADP reductase type 2 family. In terms of assembly, homodimer. FAD is required as a cofactor.

It catalyses the reaction 2 reduced [2Fe-2S]-[ferredoxin] + NADP(+) + H(+) = 2 oxidized [2Fe-2S]-[ferredoxin] + NADPH. This Bacillus mycoides (strain KBAB4) (Bacillus weihenstephanensis) protein is Ferredoxin--NADP reductase 1.